The following is a 262-amino-acid chain: Abhydrolase domain-containing protein ACTT2-1 (262 aa).

Residues 260 to 262 carry the Peroxisomal targeting signal type 1 motif; it reads SKL.

Belongs to the AB hydrolase superfamily. AKT2 hydrolase family.

The protein resides in the peroxisome. The protein operates within mycotoxin biosynthesis. Its function is as follows. Abhydrolase domain-containing protein; part of the gene clusters that mediate the biosynthesis of the host-selective toxins (HSTs) ACT-toxins responsible for brown spot of tangerine disease by the tangerine pathotype which affects tangerines and mandarins. ACT-toxins consist of three moieties, 9,10-epoxy-8-hydroxy-9-methyl-decatrienoic acid (EDA), valine and a polyketide. ACT-toxin I is toxic to both citrus and pear; toxin II the 5''-deoxy derivative of ACT-toxin I, is highly toxic to pear and slightly toxic to citrus. On cellular level, ACT-toxins affect plasma membrane of susceptible cells and cause a sudden increase in loss of K(+) after a few minutes of toxin treatment. The acyl-CoA ligase ACTT1, the hydrolase ACTT2, the enoyl-CoA hydratases ACTT3 and ACTT6, and the acyl-CoA synthetase ACTT5 are all involved in the biosynthesis of the AK-, AF- and ACT-toxin common 9,10-epoxy-8-hydroxy-9-methyl-decatrienoic acid (EDA) structural moiety. The exact role of each enzyme, and of additional enzymes identified within the AF-toxin clusters have still to be determined. On the other hand, ACTTS1 to ACTTS4 are specific to the tangerine pathotype. The function of ACTTS3 is to elongate the polyketide chain portion of ACT-toxin that is unique to this toxin. The enoyl-reductase ACTTS2 might complement the missing enoyl-reductase (ER) domain in ACTTS3 in the synthesis of the polyketide portion of ACT-toxin. The roles of the nonribosomal peptide synthetases-related proteins ACTTS1 and ACTTS4 have also still not been elucidated. The chain is Abhydrolase domain-containing protein ACTT2-1 from Alternaria alternata (Alternaria rot fungus).